The chain runs to 343 residues: Dihydroorotase (343 aa).

Residues histidine 14 and histidine 16 each contribute to the Zn(2+) site. Substrate contacts are provided by residues 16 to 18 and asparagine 42; that span reads HVR. Residues lysine 99, histidine 136, and histidine 174 each coordinate Zn(2+). At lysine 99 the chain carries N6-carboxylysine. Substrate is bound at residue histidine 136. Leucine 219 serves as a coordination point for substrate. Aspartate 247 is a binding site for Zn(2+). Aspartate 247 is an active-site residue. Residues histidine 251 and alanine 263 each coordinate substrate.

The protein belongs to the metallo-dependent hydrolases superfamily. DHOase family. Class II DHOase subfamily. In terms of assembly, homodimer. Zn(2+) is required as a cofactor.

It carries out the reaction (S)-dihydroorotate + H2O = N-carbamoyl-L-aspartate + H(+). It functions in the pathway pyrimidine metabolism; UMP biosynthesis via de novo pathway; (S)-dihydroorotate from bicarbonate: step 3/3. In terms of biological role, catalyzes the reversible cyclization of carbamoyl aspartate to dihydroorotate. This chain is Dihydroorotase, found in Variovorax paradoxus (strain S110).